The primary structure comprises 252 residues: Cell division protein ZapD (252 aa).

Belongs to the ZapD family. Interacts with FtsZ.

The protein localises to the cytoplasm. Its function is as follows. Cell division factor that enhances FtsZ-ring assembly. Directly interacts with FtsZ and promotes bundling of FtsZ protofilaments, with a reduction in FtsZ GTPase activity. This Cupriavidus pinatubonensis (strain JMP 134 / LMG 1197) (Cupriavidus necator (strain JMP 134)) protein is Cell division protein ZapD.